We begin with the raw amino-acid sequence, 468 residues long: Chromosomal replication initiator protein DnaA (468 aa).

The tract at residues 1–84 (MSSSLWLQCL…RFEVGSKPIS (84 aa)) is domain I, interacts with DnaA modulators. Residues 84-131 (SAPPRPQRTAADVAAATSAPAQMQARQSLHKPWESRGPEPVDDLNHRS) form a domain II region. The segment at 112-132 (LHKPWESRGPEPVDDLNHRSN) is disordered. Residues 114 to 129 (KPWESRGPEPVDDLNH) show a composition bias toward basic and acidic residues. The domain III, AAA+ region stretch occupies residues 132–348 (NVNPKHKFTN…GALNRVVANA (217 aa)). Residues glycine 176, glycine 178, lysine 179, and threonine 180 each contribute to the ATP site. The interval 349 to 468 (NFTGRAITID…YSNLIRTLSS (120 aa)) is domain IV, binds dsDNA.

It belongs to the DnaA family. In terms of assembly, oligomerizes as a right-handed, spiral filament on DNA at oriC.

The protein resides in the cytoplasm. In terms of biological role, plays an essential role in the initiation and regulation of chromosomal replication. ATP-DnaA binds to the origin of replication (oriC) to initiate formation of the DNA replication initiation complex once per cell cycle. Binds the DnaA box (a 9 base pair repeat at the origin) and separates the double-stranded (ds)DNA. Forms a right-handed helical filament on oriC DNA; dsDNA binds to the exterior of the filament while single-stranded (ss)DNA is stabiized in the filament's interior. The ATP-DnaA-oriC complex binds and stabilizes one strand of the AT-rich DNA unwinding element (DUE), permitting loading of DNA polymerase. After initiation quickly degrades to an ADP-DnaA complex that is not apt for DNA replication. Binds acidic phospholipids. This is Chromosomal replication initiator protein DnaA from Aliivibrio salmonicida (strain LFI1238) (Vibrio salmonicida (strain LFI1238)).